Here is a 155-residue protein sequence, read N- to C-terminus: Ribosomal RNA large subunit methyltransferase H (155 aa).

Residues L73, G104, and 123 to 128 (ISKMTF) each bind S-adenosyl-L-methionine.

Belongs to the RNA methyltransferase RlmH family. As to quaternary structure, homodimer.

It is found in the cytoplasm. It catalyses the reaction pseudouridine(1915) in 23S rRNA + S-adenosyl-L-methionine = N(3)-methylpseudouridine(1915) in 23S rRNA + S-adenosyl-L-homocysteine + H(+). Its function is as follows. Specifically methylates the pseudouridine at position 1915 (m3Psi1915) in 23S rRNA. The chain is Ribosomal RNA large subunit methyltransferase H from Francisella tularensis subsp. novicida (strain U112).